Reading from the N-terminus, the 600-residue chain is UPF0588 membrane protein C20F10.02c (600 aa).

The next 2 helical transmembrane spans lie at 409 to 429 (LSAT…TSLV) and 437 to 457 (YHWL…SVLI).

Belongs to the UPF0588 family.

It localises to the membrane. This is UPF0588 membrane protein C20F10.02c from Schizosaccharomyces pombe (strain 972 / ATCC 24843) (Fission yeast).